A 213-amino-acid polypeptide reads, in one-letter code: T-cell surface glycoprotein CD8 beta chain (213 aa).

Positions 1 to 21 (MQPWLWLVFSMKLAALWSSSA) are cleaved as a signal peptide. The 112-residue stretch at 22 to 133 (LIQTPSSLLV…KMVFGTGTKL (112 aa)) folds into the Ig-like V-type domain. The Extracellular segment spans residues 22 to 175 (LIQTPSSLLV…QKGLTCSLTT (154 aa)). Residue N34 is glycosylated (N-linked (GlcNAc...) asparagine). An intrachain disulfide couples C41 to C117. A helical membrane pass occupies residues 176-196 (LSLLVVCILLLLAFLGVAVYF). Over 197 to 213 (YCVRRRARIHFMKQFHK) the chain is Cytoplasmic.

In terms of assembly, forms disulfide-linked heterodimers with CD8A at the cell surface. Interacts with CD3D; this interaction couples TCR-CD3 with CD8. Interacts with LCK. Post-translationally, palmitoylated at the cytoplasmic tail and thereby targets the heterodimer CD8A/CD8B to lipid rafts unlike CD8A homodimers.

The protein localises to the membrane. Its function is as follows. Integral membrane glycoprotein that plays an essential role in the immune response and serves multiple functions in responses against both external and internal offenses. In T-cells, functions primarily as a coreceptor for MHC class I molecule:peptide complex. The antigens presented by class I peptides are derived from cytosolic proteins while class II derived from extracellular proteins. Interacts simultaneously with the T-cell receptor (TCR) and the MHC class I proteins presented by antigen presenting cells (APCs). In turn, recruits the Src kinase LCK to the vicinity of the TCR-CD3 complex. A palmitoylation site in the cytoplasmic tail of CD8B chain contributes to partitioning of CD8 into the plasma membrane lipid rafts where signaling proteins are enriched. Once LCK recruited, it initiates different intracellular signaling pathways by phosphorylating various substrates ultimately leading to lymphokine production, motility, adhesion and activation of cytotoxic T-lymphocytes (CTLs). Additionally, plays a critical role in thymic selection of CD8+ T-cells. The sequence is that of T-cell surface glycoprotein CD8 beta chain (Cd8b) from Mus musculus (Mouse).